Reading from the N-terminus, the 282-residue chain is Eukaryotic translation initiation factor 3 subunit G (282 aa).

The disordered stretch occupies residues 1–27 (MSSSKSLDWADDEDYGTGLPSIQTFDN). Phosphoserine is present on residues S160 and S164. One can recognise an RRM domain in the interval 202-280 (ATLRVTNLSD…LILRCEFSKP (79 aa)).

It belongs to the eIF-3 subunit G family. In terms of assembly, component of the eukaryotic translation initiation factor 3 (eIF-3) complex. The eIF-3 complex appears to include tif32/eif3a, SPAC25G10.08/eif3b, tif33/eif3c, SPBC4C3.07/eif3f, tif35/eif3g and sum1/eif3i. This set of common subunits may also associate exclusively with either moe1/eif3d and int6/eif3e, or with SPAC821.05/eif3h and SPAC1751.03/eif3m. The eIF-3 complex may also include SPAC3A12.13c/eif3j.

Its subcellular location is the cytoplasm. Functionally, RNA-binding component of the eukaryotic translation initiation factor 3 (eIF-3) complex, which is involved in protein synthesis of a specialized repertoire of mRNAs and, together with other initiation factors, stimulates binding of mRNA and methionyl-tRNAi to the 40S ribosome. The eIF-3 complex specifically targets and initiates translation of a subset of mRNAs involved in cell proliferation. This subunit can bind 18S rRNA. This Schizosaccharomyces pombe (strain 972 / ATCC 24843) (Fission yeast) protein is Eukaryotic translation initiation factor 3 subunit G (tif35).